A 633-amino-acid polypeptide reads, in one-letter code: Laccase ARB_05828 (633 aa).

The N-terminal stretch at 1-16 is a signal peptide; the sequence is MKRLGLAALYIGSALA. A propeptide spanning residues 22–47 is cleaved from the precursor; that stretch reads GPPSRNVPRDDFPMFNPLPSTDLNTR. N143 carries N-linked (GlcNAc...) asparagine glycosylation. The Cu cation site is built by H148, H150, H192, and H194. Cysteines 169 and 607 form a disulfide. Residues 224-353 form the Plastocyanin-like domain; it reads LLMTDHLHSS…GRYWVRTTPA (130 aa). Residues N286 and N456 are each glycosylated (N-linked (GlcNAc...) asparagine). 7 residues coordinate Cu cation: H508, H511, H513, H568, C569, H570, and H574.

The protein belongs to the multicopper oxidase family. Monomer. It depends on Cu cation as a cofactor.

The protein localises to the secreted. It carries out the reaction 4 hydroquinone + O2 = 4 benzosemiquinone + 2 H2O. This chain is Laccase ARB_05828, found in Arthroderma benhamiae (strain ATCC MYA-4681 / CBS 112371) (Trichophyton mentagrophytes).